The following is a 556-amino-acid chain: Pumilio homolog 11 (556 aa).

In terms of domain architecture, PUM-HD spans 215-556 (GGSRELDGSA…RIFSKNLWKK (342 aa)). Pumilio repeat units lie at residues 238 to 276 (SMVD…IIFK), 277 to 313 (EVIN…ILIR), 316 to 351 (SKPG…SLVK), 353 to 388 (ALVP…FILE), 389 to 424 (AATK…KLVD), 425 to 459 (EISR…VLFE), 460 to 495 (LRGN…VNEL), and 496 to 531 (VSVL…SLVE).

It is found in the cytoplasm. Functionally, sequence-specific RNA-binding protein that regulates translation and mRNA stability by binding the 3'-UTR of target mRNAs. The sequence is that of Pumilio homolog 11 (APUM11) from Arabidopsis thaliana (Mouse-ear cress).